The following is a 323-amino-acid chain: Ribose 1,5-bisphosphate isomerase (323 aa).

Substrate-binding positions include 22 to 25 and Arg65; that span reads RGAA. The Proton acceptor role is filled by Cys130. Residue Asp199 is the Proton donor of the active site. Residues 209-210 and Lys235 contribute to the substrate site; that span reads NK. Residue Lys210 forms a Glycyl lysine isopeptide (Lys-Gly) (interchain with G-Cter in SAMP2) linkage.

Belongs to the eIF-2B alpha/beta/delta subunits family. R15P isomerase subfamily.

It carries out the reaction alpha-D-ribose 1,5-bisphosphate = D-ribulose 1,5-bisphosphate. Its function is as follows. Catalyzes the isomerization of ribose 1,5-bisphosphate (R15P) to ribulose 1,5-bisphosphate (RuBP), the CO(2) acceptor and substrate for RubisCO. Functions in an archaeal AMP degradation pathway, together with AMP phosphorylase and RubisCO. This Haloferax volcanii (strain ATCC 29605 / DSM 3757 / JCM 8879 / NBRC 14742 / NCIMB 2012 / VKM B-1768 / DS2) (Halobacterium volcanii) protein is Ribose 1,5-bisphosphate isomerase.